The primary structure comprises 235 residues: Probable transcriptional regulatory protein CFF8240_0424 (235 aa).

This sequence belongs to the TACO1 family.

The protein localises to the cytoplasm. This Campylobacter fetus subsp. fetus (strain 82-40) protein is Probable transcriptional regulatory protein CFF8240_0424.